Here is a 387-residue protein sequence, read N- to C-terminus: EARP-interacting protein homolog (387 aa).

WD repeat units follow at residues 132-172 (TAHG…SKAV), 182-222 (KGQL…QIYC), 226-266 (AHGQ…DPVK), 270-310 (EHSH…SEPF), and 345-385 (EHED…KYHI).

The protein belongs to the WD repeat EIPR1 family.

This Gekko japonicus (Schlegel's Japanese gecko) protein is EARP-interacting protein homolog.